Consider the following 220-residue polypeptide: Thiopurine S-methyltransferase (220 aa).

The S-adenosyl-L-methionine site is built by Trp10, Leu45, Glu66, and Arg123.

It belongs to the class I-like SAM-binding methyltransferase superfamily. TPMT family.

The protein localises to the cytoplasm. The enzyme catalyses S-adenosyl-L-methionine + a thiopurine = S-adenosyl-L-homocysteine + a thiopurine S-methylether.. The chain is Thiopurine S-methyltransferase from Pseudomonas syringae pv. tomato (strain ATCC BAA-871 / DC3000).